Here is a 269-residue protein sequence, read N- to C-terminus: Ribosomal RNA small subunit methyltransferase A (269 aa).

Residues Asn-20, Leu-22, Gly-47, Glu-68, Asp-90, and Asn-110 each coordinate S-adenosyl-L-methionine.

It belongs to the class I-like SAM-binding methyltransferase superfamily. rRNA adenine N(6)-methyltransferase family. RsmA subfamily.

Its subcellular location is the cytoplasm. It carries out the reaction adenosine(1518)/adenosine(1519) in 16S rRNA + 4 S-adenosyl-L-methionine = N(6)-dimethyladenosine(1518)/N(6)-dimethyladenosine(1519) in 16S rRNA + 4 S-adenosyl-L-homocysteine + 4 H(+). In terms of biological role, specifically dimethylates two adjacent adenosines (A1518 and A1519) in the loop of a conserved hairpin near the 3'-end of 16S rRNA in the 30S particle. May play a critical role in biogenesis of 30S subunits. This chain is Ribosomal RNA small subunit methyltransferase A, found in Chlorobium phaeobacteroides (strain DSM 266 / SMG 266 / 2430).